The following is a 278-amino-acid chain: Undecaprenyl-diphosphatase (278 aa).

The next 6 helical transmembrane spans lie at 44 to 64 (FLEM…MTIY), 84 to 104 (WQLW…AVPL), 112 to 132 (FNFM…FIWI), 187 to 207 (SVAA…YSGL), 224 to 244 (VWIL…VIRF), and 254 to 274 (FTVF…YAFI).

It belongs to the UppP family.

It is found in the cell membrane. It carries out the reaction di-trans,octa-cis-undecaprenyl diphosphate + H2O = di-trans,octa-cis-undecaprenyl phosphate + phosphate + H(+). Its function is as follows. Catalyzes the dephosphorylation of undecaprenyl diphosphate (UPP). Confers resistance to bacitracin. The chain is Undecaprenyl-diphosphatase from Streptococcus suis (strain 98HAH33).